A 125-amino-acid chain; its full sequence is Large ribosomal subunit protein bL12 (125 aa).

Belongs to the bacterial ribosomal protein bL12 family. As to quaternary structure, homodimer. Part of the ribosomal stalk of the 50S ribosomal subunit. Forms a multimeric L10(L12)X complex, where L10 forms an elongated spine to which 2 to 4 L12 dimers bind in a sequential fashion. Binds GTP-bound translation factors.

In terms of biological role, forms part of the ribosomal stalk which helps the ribosome interact with GTP-bound translation factors. Is thus essential for accurate translation. The protein is Large ribosomal subunit protein bL12 of Methylobacterium radiotolerans (strain ATCC 27329 / DSM 1819 / JCM 2831 / NBRC 15690 / NCIMB 10815 / 0-1).